The chain runs to 151 residues: Probable ubiquitin-conjugating enzyme E2 W-A (151 aa).

The UBC core domain maps to 3-151 (SMQKRLQKEL…TKWWYHDDTC (149 aa)). Cys-91 acts as the Glycyl thioester intermediate in catalysis.

This sequence belongs to the ubiquitin-conjugating enzyme family.

The protein localises to the nucleus. It catalyses the reaction S-ubiquitinyl-[E1 ubiquitin-activating enzyme]-L-cysteine + [E2 ubiquitin-conjugating enzyme]-L-cysteine = [E1 ubiquitin-activating enzyme]-L-cysteine + S-ubiquitinyl-[E2 ubiquitin-conjugating enzyme]-L-cysteine.. The catalysed reaction is S-ubiquitinyl-[E1 ubiquitin-activating enzyme]-L-cysteine + [acceptor protein]-N-terminal-amino acid = [E1 ubiquitin-activating enzyme]-L-cysteine + N-terminal-ubiquitinyl-[acceptor protein].. The protein operates within protein modification; protein ubiquitination. Accepts ubiquitin from the E1 complex and catalyzes its covalent attachment to other proteins. Catalyzes monoubiquitination. Involved in degradation of misfolded chaperone substrate and DNA repair. The sequence is that of Probable ubiquitin-conjugating enzyme E2 W-A (ube2wa) from Danio rerio (Zebrafish).